Consider the following 34-residue polypeptide: Voltage sensor toxin 3 (34 aa).

3 disulfide bridges follow: C2/C17, C9/C22, and C16/C29.

The protein belongs to the neurotoxin 10 (Hwtx-1) family. 61 (VSTX3) subfamily. As to expression, expressed by the venom gland.

It localises to the secreted. Potent voltage-gated sodium channel blocker (IC(50)=190 nM and 210 nM on human and rat Nav1.3/SCN3A respectively, 430 nM on human Nav1.7/SCN9A, 770 nM and 290 nM on human and rat Nav1.8/SCN10A, respectively). Binds the voltage-sensor domain of the potassium channel KvAP (from Aeropyrum pernix) and weakly inhibits this channel. This is Voltage sensor toxin 3 from Grammostola rosea (Chilean rose tarantula).